Reading from the N-terminus, the 212-residue chain is Pyridoxine/pyridoxamine 5'-phosphate oxidase 1 (212 aa).

Residues 8-11 (RTDY) and lysine 66 contribute to the substrate site. Residues 61–66 (RIVLLK), 76–77 (FT), lysine 83, and glutamine 105 contribute to the FMN site. The substrate site is built by tyrosine 123, arginine 127, and serine 131. FMN is bound by residues 140-141 (QS) and tryptophan 184. 190–192 (RLH) is a binding site for substrate. Residue arginine 194 coordinates FMN.

It belongs to the pyridoxamine 5'-phosphate oxidase family. In terms of assembly, homodimer. FMN is required as a cofactor.

It carries out the reaction pyridoxamine 5'-phosphate + O2 + H2O = pyridoxal 5'-phosphate + H2O2 + NH4(+). It catalyses the reaction pyridoxine 5'-phosphate + O2 = pyridoxal 5'-phosphate + H2O2. Its pathway is cofactor metabolism; pyridoxal 5'-phosphate salvage; pyridoxal 5'-phosphate from pyridoxamine 5'-phosphate: step 1/1. It functions in the pathway cofactor metabolism; pyridoxal 5'-phosphate salvage; pyridoxal 5'-phosphate from pyridoxine 5'-phosphate: step 1/1. Functionally, catalyzes the oxidation of either pyridoxine 5'-phosphate (PNP) or pyridoxamine 5'-phosphate (PMP) into pyridoxal 5'-phosphate (PLP). This chain is Pyridoxine/pyridoxamine 5'-phosphate oxidase 1, found in Ralstonia nicotianae (strain ATCC BAA-1114 / GMI1000) (Ralstonia solanacearum).